The sequence spans 401 residues: CLIP domain-containing serine protease B9 (401 aa).

The signal sequence occupies residues 1–26 (MTSYNRSVAWLTVCVLLALHIGGSHQ). One can recognise a Clip domain in the interval 30–85 (QCTTPTRLRGRCISIYECDSILDYFKQRILTWEEREFLRKSQCTGATSGRQPFVCC). 3 disulfides stabilise this stretch: Cys31/Cys84, Cys41/Cys72, and Cys47/Cys85. Asn88 carries an N-linked (GlcNAc...) asparagine glycan. The 253-residue stretch at 148-400 (IYGGQNADID…YMAWVRSNIK (253 aa)) folds into the Peptidase S1 domain. Cys178 and Cys194 are disulfide-bonded. Active-site charge relay system residues include His193 and Asp257. Disulfide bonds link Cys322/Cys339 and Cys349/Cys376. Asn330 carries N-linked (GlcNAc...) asparagine glycosylation. The active-site Charge relay system is Ser353.

It belongs to the peptidase S1 family. CLIP subfamily. In terms of assembly, forms a covalent heterodimer with SRPN2; the interaction inhibits CLIPB9 protease activity. In terms of processing, proteolytic cleavage is necessary for activation.

The protein resides in the secreted. Its activity is regulated as follows. Inhibited by serpin SRPN2. In terms of biological role, serine protease that functions in the melanization-mediated immune response. Cleaves and activates prophenoloxidase (PPO), which is required for the activation of the prophenoloxidase cascade probably following the recognition of pathogen-derived products. The polypeptide is CLIP domain-containing serine protease B9 (Anopheles gambiae (African malaria mosquito)).